An 807-amino-acid chain; its full sequence is 85/88 kDa calcium-independent phospholipase A2 (807 aa).

Serine 13 is modified (phosphoserine). 9 ANK repeats span residues 120-147 (WTVT…ANST), 151-181 (EGCT…QMDV), 185-215 (KGET…GLNQ), 219-248 (QGLT…RCNI), 251-281 (PGGF…QIHS), 286-312 (YGAS…DVDS), 316-345 (SGNT…NAGA), 349-378 (HGNT…EVDT), and 382-403 (FGET…KALL). A run of 2 helical transmembrane segments spans residues 481–501 (LLCL…LIAI) and 512–532 (LFDW…ILHS). The PNPLA domain occupies 482-666 (LCLDGGGVKG…LANNPTLDAM (185 aa)). Residues 486-491 (GGGVKG) carry the GXGXXG motif. A GXSXG motif is present at residues 518 to 522 (GTSTG). Serine 520 functions as the Nucleophile in the catalytic mechanism. Catalysis depends on aspartate 653, which acts as the Proton acceptor. A DGA/G motif is present at residues 653 to 655 (DGG). Positions 678–687 (RKGQGNKVKK) are calmodulin-binding (1-9-14 motif). Residues 749-760 (AWCEMVGIQYFR) form a calmodulin-binding (IQ motif) region.

In terms of assembly, homodimer formed by catalytic domains tightly interacting through a large hydrophobic interface. The contact area involves 3 alpha helices, several loops and a part of the beta sheet from each monomer. Both active sites of the dimer are in close proximity adopting an open conformation that provide sufficient space for phospholipid access and favoring cooperativity in deacylation-reacylation reactions. Each monomer has 9 ankyrin repeats stacked side-by-side in an elongated structure oriented outwards from the catalytic core. As to expression, expressed in pancreatic beta-cells. Expressed in skeletal muscle (at protein level).

The protein resides in the cytoplasm. It is found in the cell membrane. Its subcellular location is the mitochondrion. The protein localises to the cell projection. It localises to the pseudopodium. It carries out the reaction a 1,2-diacyl-sn-glycero-3-phosphocholine + H2O = a 1-acyl-sn-glycero-3-phosphocholine + a fatty acid + H(+). It catalyses the reaction a 1-O-alkyl-2-acyl-sn-glycero-3-phosphocholine + H2O = a 1-O-alkyl-sn-glycero-3-phosphocholine + a fatty acid + H(+). The catalysed reaction is 1,2-dihexadecanoyl-sn-glycero-3-phosphocholine + H2O = 1-hexadecanoyl-sn-glycero-3-phosphocholine + hexadecanoate + H(+). The enzyme catalyses 1-hexadecanoyl-2-(9Z-octadecenoyl)-sn-glycero-3-phosphocholine + H2O = 1-hexadecanoyl-sn-glycero-3-phosphocholine + (9Z)-octadecenoate + H(+). It carries out the reaction 1-hexadecanoyl-2-(9Z,12Z-octadecadienoyl)-sn-glycero-3-phosphocholine + H2O = (9Z,12Z)-octadecadienoate + 1-hexadecanoyl-sn-glycero-3-phosphocholine + H(+). It catalyses the reaction 1-hexadecanoyl-2-(5Z,8Z,11Z,14Z-eicosatetraenoyl)-sn-glycero-3-phosphocholine + H2O = 1-hexadecanoyl-sn-glycero-3-phosphocholine + (5Z,8Z,11Z,14Z)-eicosatetraenoate + H(+). The catalysed reaction is 1-octadecanoyl-2-(5Z,8Z,11Z,14Z-eicosatetraenoyl)-sn-glycero-3-phosphocholine + H2O = 1-octadecanoyl-sn-glycero-3-phosphocholine + (5Z,8Z,11Z,14Z)-eicosatetraenoate + H(+). The enzyme catalyses 1-hexadecanoyl-2-(5Z,8Z,11Z,14Z-eicosatetraenoyl)-sn-glycero-3-phosphoethanolamine + H2O = 1-hexadecanoyl-sn-glycero-3-phosphoethanolamine + (5Z,8Z,11Z,14Z)-eicosatetraenoate + H(+). It carries out the reaction 1,2-dihexadecanoyl-sn-glycero-3-phosphate + H2O = 1-hexadecanoyl-sn-glycero-3-phosphate + hexadecanoate + H(+). It catalyses the reaction a 1-acyl-sn-glycero-3-phosphocholine + H2O = sn-glycerol 3-phosphocholine + a fatty acid + H(+). The catalysed reaction is 1-hexadecanoyl-sn-glycero-3-phosphocholine + H2O = sn-glycerol 3-phosphocholine + hexadecanoate + H(+). The enzyme catalyses 1-(5Z,8Z,11Z,14Z-eicosatetraenoyl)-sn-glycero-3-phosphocholine + H2O = sn-glycerol 3-phosphocholine + (5Z,8Z,11Z,14Z)-eicosatetraenoate + H(+). It carries out the reaction 2-(5Z,8Z,11Z,14Z)-eicosatetraenoyl-sn-glycero-3-phosphocholine + H2O = sn-glycerol 3-phosphocholine + (5Z,8Z,11Z,14Z)-eicosatetraenoate + H(+). It catalyses the reaction 1-O-hexadecyl-2-(5Z,8Z,11Z,14Z)-eicosatetraenoyl-sn-glycero-3-phosphocholine + H2O = 1-O-hexadecyl-sn-glycero-3-phosphocholine + (5Z,8Z,11Z,14Z)-eicosatetraenoate + H(+). The catalysed reaction is 1-O-hexadecyl-2-acetyl-sn-glycero-3-phosphocholine + H2O = 1-O-hexadecyl-sn-glycero-3-phosphocholine + acetate + H(+). The enzyme catalyses hexadecanoyl-CoA + H2O = hexadecanoate + CoA + H(+). It carries out the reaction 1',3'-bis[1,2-di-(9Z-octadecenoyl)-sn-glycero-3-phospho]-glycerol + H2O = 1'-[1,2-di-(9Z-octadecenoyl)-sn-glycero-3-phospho]-3'-[1-(9Z-octadecenoyl)-sn-glycero-3-phospho]-glycerol + (9Z)-octadecenoate + H(+). It catalyses the reaction 1'-[1,2-di-(9Z-octadecenoyl)-sn-glycero-3-phospho]-3'-[1-(9Z-octadecenoyl)-sn-glycero-3-phospho]-glycerol + H2O = 1',3'-bis-[1-(9Z-octadecenoyl)-sn-glycero-3-phospho]-glycerol + (9Z)-octadecenoate + H(+). The catalysed reaction is 1',3'-bis-[1,2-di-(9Z,12Z-octadecadienoyl)-sn-glycero-3-phospho]-glycerol + H2O = 1'-[1,2-di-(9Z,12Z-octadecadienoyl)-sn-glycero-3-phospho]-3'-[1-(9Z,12Z-octadecadienoyl)-sn-glycero-3-phospho]-glycerol + (9Z,12Z)-octadecadienoate + H(+). The enzyme catalyses 1-octadecanoyl-2-(15-hydroxy-(5Z,8Z,11Z,13E)-eicosatetraenoyl)-sn-glycero-3-phosphoethanolamine + H2O = 1-octadecanoyl-sn-glycero-3-phosphoethanolamine + 15-hydroxy-(5Z,8Z,11Z,13E)-eicosatetraenoate + H(+). With respect to regulation, activated by ATP. Inhibited by calcium-activated calmodulin. Inhibited by bromoenol lactone (BEL). Functionally, calcium-independent phospholipase involved in phospholipid remodeling with implications in cellular membrane homeostasis, mitochondrial integrity and signal transduction. Hydrolyzes the ester bond of the fatty acyl group attached at sn-1 or sn-2 position of phospholipids (phospholipase A1 and A2 activity respectively), producing lysophospholipids that are used in deacylation-reacylation cycles. Hydrolyzes both saturated and unsaturated long fatty acyl chains in various glycerophospholipid classes such as phosphatidylcholines, phosphatidylethanolamines and phosphatidates, with a preference for hydrolysis at sn-2 position. Can further hydrolyze lysophospholipids carrying saturated fatty acyl chains (lysophospholipase activity). Upon oxidative stress, contributes to remodeling of mitochondrial phospholipids in pancreatic beta cells, in a repair mechanism to reduce oxidized lipid content. Preferentially hydrolyzes oxidized polyunsaturated fatty acyl chains from cardiolipins, yielding monolysocardiolipins that can be reacylated with unoxidized fatty acyls to regenerate native cardiolipin species. Hydrolyzes oxidized glycerophosphoethanolamines present in pancreatic islets, releasing oxidized polyunsaturated fatty acids such as hydroxyeicosatetraenoates (HETEs). Has thioesterase activity toward fatty-acyl CoA releasing CoA-SH known to facilitate fatty acid transport and beta-oxidation in mitochondria particularly in skeletal muscle. Plays a role in regulation of membrane dynamics and homeostasis. Selectively hydrolyzes sn-2 arachidonoyl group in plasmalogen phospholipids, structural components of lipid rafts and myelin. Regulates F-actin polymerization at the pseudopods, which is required for both speed and directionality of MCP1/CCL2-induced monocyte chemotaxis. Targets membrane phospholipids to produce potent lipid signaling messengers. Generates lysophosphatidate (LPA, 1-acyl-glycerol-3-phosphate), which acts via G-protein receptors in various cell types. Has phospholipase A2 activity toward platelet-activating factor (PAF, 1-O-alkyl-2-acetyl-sn-glycero-3-phosphocholine), likely playing a role in inactivation of this potent pro-inflammatory signaling lipid. In response to glucose, amplifies calcium influx in pancreatic beta cells to promote INS secretion. This Rattus norvegicus (Rat) protein is 85/88 kDa calcium-independent phospholipase A2 (Pla2g6).